We begin with the raw amino-acid sequence, 371 residues long: N-acetyldiaminopimelate deacetylase (371 aa).

The active site involves aspartate 68. The active-site Proton acceptor is glutamate 127.

This sequence belongs to the peptidase M20A family. N-acetyldiaminopimelate deacetylase subfamily.

It carries out the reaction N-acetyl-(2S,6S)-2,6-diaminopimelate + H2O = (2S,6S)-2,6-diaminopimelate + acetate. The protein operates within amino-acid biosynthesis; L-lysine biosynthesis via DAP pathway; LL-2,6-diaminopimelate from (S)-tetrahydrodipicolinate (acetylase route): step 3/3. Catalyzes the conversion of N-acetyl-diaminopimelate to diaminopimelate and acetate. The sequence is that of N-acetyldiaminopimelate deacetylase from Listeria monocytogenes serotype 4a (strain HCC23).